A 235-amino-acid chain; its full sequence is Purine nucleoside phosphorylase DeoD-type (235 aa).

His-4 lines the a purine D-ribonucleoside pocket. Residues Gly-20, Arg-24, Arg-43, and 87-90 (RVGT) each bind phosphate. Residues 179–181 (EME) and 203–204 (SD) contribute to the a purine D-ribonucleoside site. Catalysis depends on Asp-204, which acts as the Proton donor.

It belongs to the PNP/UDP phosphorylase family. In terms of assembly, homohexamer; trimer of homodimers.

It carries out the reaction a purine D-ribonucleoside + phosphate = a purine nucleobase + alpha-D-ribose 1-phosphate. The enzyme catalyses a purine 2'-deoxy-D-ribonucleoside + phosphate = a purine nucleobase + 2-deoxy-alpha-D-ribose 1-phosphate. In terms of biological role, catalyzes the reversible phosphorolytic breakdown of the N-glycosidic bond in the beta-(deoxy)ribonucleoside molecules, with the formation of the corresponding free purine bases and pentose-1-phosphate. The sequence is that of Purine nucleoside phosphorylase DeoD-type from Exiguobacterium sibiricum (strain DSM 17290 / CCUG 55495 / CIP 109462 / JCM 13490 / 255-15).